Consider the following 137-residue polypeptide: Large ribosomal subunit protein uL16 (137 aa).

Belongs to the universal ribosomal protein uL16 family. As to quaternary structure, part of the 50S ribosomal subunit.

Functionally, binds 23S rRNA and is also seen to make contacts with the A and possibly P site tRNAs. In Lawsonia intracellularis (strain PHE/MN1-00), this protein is Large ribosomal subunit protein uL16.